The primary structure comprises 327 residues: Methionyl-tRNA formyltransferase (327 aa).

Residue 121-124 (SLLP) coordinates (6S)-5,6,7,8-tetrahydrofolate.

Belongs to the Fmt family.

It catalyses the reaction L-methionyl-tRNA(fMet) + (6R)-10-formyltetrahydrofolate = N-formyl-L-methionyl-tRNA(fMet) + (6S)-5,6,7,8-tetrahydrofolate + H(+). Attaches a formyl group to the free amino group of methionyl-tRNA(fMet). The formyl group appears to play a dual role in the initiator identity of N-formylmethionyl-tRNA by promoting its recognition by IF2 and preventing the misappropriation of this tRNA by the elongation apparatus. This Burkholderia ambifaria (strain ATCC BAA-244 / DSM 16087 / CCUG 44356 / LMG 19182 / AMMD) (Burkholderia cepacia (strain AMMD)) protein is Methionyl-tRNA formyltransferase.